The primary structure comprises 543 residues: Putative fatty acyl-CoA reductase CG8303 (543 aa).

Residues 1–29 (MAVITEHGGTTSSPPENNNSIGNGKHRVN) are disordered. Polar residues predominate over residues 8 to 22 (GGTTSSPPENNNSIG). A run of 3 helical transmembrane segments spans residues 386–406 (LFFYLFHLLPAMVFIIPEKLF), 500–520 (VFNVLYYAGYVVIFAVLYFAL), and 522–542 (LTLGLQIGLTLAVLIWGFLVW).

It belongs to the fatty acyl-CoA reductase family.

Its subcellular location is the membrane. It catalyses the reaction a long-chain fatty acyl-CoA + 2 NADPH + 2 H(+) = a long-chain primary fatty alcohol + 2 NADP(+) + CoA. The enzyme catalyses hexadecanoyl-CoA + 2 NADPH + 2 H(+) = hexadecan-1-ol + 2 NADP(+) + CoA. It carries out the reaction octadecanoyl-CoA + 2 NADPH + 2 H(+) = octadecan-1-ol + 2 NADP(+) + CoA. Catalyzes the reduction of C16 or C18 fatty acyl-CoA to fatty alcohols. The protein is Putative fatty acyl-CoA reductase CG8303 of Drosophila melanogaster (Fruit fly).